A 636-amino-acid polypeptide reads, in one-letter code: Dehydrogenase ARMGADRAFT_1018426 (636 aa).

Positions 1-19 (MPALTYLLLAAIGASTVHS) are cleaved as a signal peptide. Residues 49-50 (TA) and 70-71 (EG) contribute to the FAD site. An N-linked (GlcNAc...) asparagine glycan is attached at N99. FAD contacts are provided by residues W104 and 134–137 (NGLT). N253 is a glycosylation site (N-linked (GlcNAc...) asparagine). V280 contacts FAD. 4 N-linked (GlcNAc...) asparagine glycosylation sites follow: N333, N380, N394, and N498. Residue H570 is the Proton acceptor of the active site. FAD is bound by residues A603 and 614–615 (PS).

This sequence belongs to the GMC oxidoreductase family. Requires FAD as cofactor.

The protein operates within secondary metabolite biosynthesis. Dehydrogenase, part of the gene cluster that mediates the biosynthesis of melleolides, a range of antifungal and phytotoxic polyketide derivatives composed of an orsellinic acid (OA) moiety esterified to various sesquiterpene alcohols. The first step in melleolides biosynthesis is performed by the delta(6)-protoilludene synthase PRO1 which catalyzes the cyclization of farnesyl diphosphate to protoilludene. The orsellinic acid synthase armB produces OA by condensing acetyl-CoA with 3 malonyl-CoA units in a three-round chain elongation reaction folowed by a C2-C7 ring closure. ArmB further catalyzes the trans-esterification of OA to the various sesquiterpene alcohols resulting from the hydroxylation of protoilludene. The melleolides cluster also includes 5 cytochrome P450 monooxygenases, 4 NAD(+)-dependent oxidoreductases, one flavin-dependent oxidoreductase, and one O-methyltransferase. The cytochrome P450 monooxygenases may be involved in protoilludene hydroxylation to elaborate melleolides with multiple alcohol groups, such as melleolide D, which carries alcohol functionalities at C-4, C-5, C-10, and C-13. The role of the NAD(+)-dependent enzymes remains unknown. Numerous melleolides, including arnamial, show 5'-O-methylation of the aromatic moiety which may be catalyzed by the methyltransferase encoded in the cluster. The flavin-dependent oxidoreductase might represent the dehydrogenase yielding the aldehyde in position 1 of arnamial and other melleolides. Finally, several halogenase localized outside of the cluster, are able to catalyze the transfer of a single chlorine atom to the melleolide backbone, resulting in a 6'-chloromelleolide product. This Armillaria gallica (Bulbous honey fungus) protein is Dehydrogenase ARMGADRAFT_1018426.